We begin with the raw amino-acid sequence, 612 residues long: Citryl-spermidine/3,4-dihydroxybenzoyl-citryl-spermidine:spermidine ligase (612 aa).

ATP-binding positions include 282-284 (SMR), Lys298, Arg310, Tyr390, and Glu461.

Belongs to the IucA/IucC family. Homodimer.

The catalysed reaction is N(8)-citryl-spermidine + spermidine + ATP = N(8),N'(8)-citryl-bis(spermidine) + AMP + diphosphate + H(+). It carries out the reaction N(1)-(3,4-dihydroxybenzoyl)-N(8)-citryl-spermidine + spermidine + ATP = N(1)-(3,4-dihydroxybenzoyl)-N(8),N'(8)-citryl-bis(spermidine) + AMP + diphosphate + H(+). It functions in the pathway siderophore biosynthesis; petrobactin biosynthesis. Functionally, involved in the biosynthesis of petrobactin, a catecholate siderophore that functions in both iron acquisition and virulence. Catalyzes the ATP-dependent condensation of spermidine with N(8)-citryl-spermidine or N(1)-(3,4-dihydroxbenzoyl)-N(8)-citryl-spermidine, two intermediates in petrobactin biosynthesis pathway. In Bacillus anthracis, this protein is Citryl-spermidine/3,4-dihydroxybenzoyl-citryl-spermidine:spermidine ligase.